Here is a 919-residue protein sequence, read N- to C-terminus: Translocase of chloroplast 101, chloroplastic (919 aa).

2 disordered regions span residues 20-47 (SASR…VIEG) and 64-211 (VDDE…NETR). The span at 73-88 (SENKAVVETEKVESKP) shows a compositional bias: basic and acidic residues. The span at 96 to 128 (FAEEDGDSDADAEDEDDEDDEDDDEDDDDEDDK) shows a compositional bias: acidic residues. Residues 182 to 207 (QRPNGAPSTQLTATTEENANSDTAEG) show a composition bias toward polar residues. The AIG1-type G domain occupies 284–513 (DFACTILVLG…KLQETATPGR (230 aa)). A G1 region spans residues 293-300 (GKTGVGKS). GTP is bound at residue 296–301 (GVGKSA). S300 serves as a coordination point for Mg(2+). The G2 stretch occupies residues 319–323 (PSTNK). Residues 340–343 (DTPG) are G3. The tract at residues 412–415 (THAS) is G4. GTP is bound by residues H413 and 461–462 (EN). Residues 461–463 (ENH) are G5. Disordered stretches follow at residues 540 to 585 (LPDE…LTKE) and 611 to 650 (RRRK…PMPD). Residues 543–567 (EQLDESDESDDDEEEEDSEADDYDE) are compositionally biased toward acidic residues. Over residues 574–585 (LSKEELEELTKE) the composition is skewed to basic and acidic residues. Over residues 629 to 638 (AQPDEADDEA) the composition is skewed to acidic residues. Over residues 641–650 (PAAVPVPMPD) the composition is skewed to low complexity. Residues 893–914 (MVLIGIVPILRSLINCRFGFGG) traverse the membrane as a helical segment.

It belongs to the TRAFAC class TrmE-Era-EngA-EngB-Septin-like GTPase superfamily. AIG1/Toc34/Toc159-like paraseptin GTPase family. TOC159 subfamily. As to quaternary structure, part of the TOC core complex. Mg(2+) is required as a cofactor.

Its subcellular location is the plastid. It is found in the chloroplast outer membrane. In terms of biological role, GTPase involved in protein precursor import into chloroplasts. Seems to recognize chloroplast-destined precursor proteins and regulate their presentation to the translocation channel through GTP hydrolysis. Probably specialized in the import of nuclear encoded non-photosynthetic preproteins from the cytoplasm to the chloroplast. The polypeptide is Translocase of chloroplast 101, chloroplastic (Physcomitrium patens (Spreading-leaved earth moss)).